Here is a 30-residue protein sequence, read N- to C-terminus: Thermophilic aminopeptidase 1 alpha chain (30 aa).

Belongs to the peptidase M42 family. As to quaternary structure, 12 chains of two different but homologous types, alpha and beta, which can combine in various ratios. A divalent metal cation serves as cofactor.

Functionally, metalloenzyme of broad specificity, releasing all N-terminal amino acids. The sequence is that of Thermophilic aminopeptidase 1 alpha chain from Geobacillus stearothermophilus (Bacillus stearothermophilus).